Consider the following 571-residue polypeptide: Coiled-coil domain-containing protein 22 homolog (571 aa).

Coiled-coil stretches lie at residues 406–434 (MMDL…SRTA) and 509–571 (CAEL…AHLR).

This sequence belongs to the CCDC22 family.

This chain is Coiled-coil domain-containing protein 22 homolog, found in Culex quinquefasciatus (Southern house mosquito).